Consider the following 460-residue polypeptide: Argininosuccinate lyase (460 aa).

Belongs to the lyase 1 family. Argininosuccinate lyase subfamily.

The protein resides in the cytoplasm. It catalyses the reaction 2-(N(omega)-L-arginino)succinate = fumarate + L-arginine. The protein operates within amino-acid biosynthesis; L-arginine biosynthesis; L-arginine from L-ornithine and carbamoyl phosphate: step 3/3. The protein is Argininosuccinate lyase of Desulforamulus reducens (strain ATCC BAA-1160 / DSM 100696 / MI-1) (Desulfotomaculum reducens).